We begin with the raw amino-acid sequence, 881 residues long: Valine--tRNA ligase (881 aa).

A 'HIGH' region motif is present at residues 49 to 59 (PNVTGKLHLGH). The short motif at 526–530 (KMSKS) is the 'KMSKS' region element. ATP is bound at residue Lys529. Positions 810-881 (LADLINLDEE…VRQRLADLEK (72 aa)) form a coiled coil.

The protein belongs to the class-I aminoacyl-tRNA synthetase family. ValS type 1 subfamily. Monomer.

It localises to the cytoplasm. It catalyses the reaction tRNA(Val) + L-valine + ATP = L-valyl-tRNA(Val) + AMP + diphosphate. Functionally, catalyzes the attachment of valine to tRNA(Val). As ValRS can inadvertently accommodate and process structurally similar amino acids such as threonine, to avoid such errors, it has a 'posttransfer' editing activity that hydrolyzes mischarged Thr-tRNA(Val) in a tRNA-dependent manner. The protein is Valine--tRNA ligase of Bacillus cereus (strain ATCC 10987 / NRS 248).